A 161-amino-acid polypeptide reads, in one-letter code: Epididymal protein 13 (161 aa).

A signal peptide spans 1–23 (MHRSEPFLKMSLLILLFLGLAEA). N-linked (GlcNAc...) asparagine glycosylation is present at Asn-56.

The protein localises to the secreted. This Homo sapiens (Human) protein is Epididymal protein 13.